Reading from the N-terminus, the 154-residue chain is Putative antiporter subunit mnhG2 (154 aa).

Helical transmembrane passes span 11–31 (IASI…IGIV), 51–71 (VLLT…FFSV), and 72–92 (RLLL…HLIS).

The protein belongs to the CPA3 antiporters (TC 2.A.63) subunit G family. In terms of assembly, may form a heterooligomeric complex that consists of seven subunits: mnhA2, mnhB2, mnhC2, mnhD2, mnhE2, mnhF2 and mnhG2.

The protein resides in the cell membrane. This Staphylococcus epidermidis (strain ATCC 35984 / DSM 28319 / BCRC 17069 / CCUG 31568 / BM 3577 / RP62A) protein is Putative antiporter subunit mnhG2 (mnhG2).